A 521-amino-acid chain; its full sequence is Cytochrome P450 monooxygenase bet2 (521 aa).

Residues serine 23–valine 43 form a helical membrane-spanning segment. N-linked (GlcNAc...) asparagine glycosylation is present at asparagine 188. A heme-binding site is contributed by cysteine 461.

It belongs to the cytochrome P450 family. Heme is required as a cofactor.

It is found in the membrane. It catalyses the reaction dehydroprobetaenone I + NADPH + O2 + H(+) = epoxybetaenone + NADP(+) + H2O. It carries out the reaction dehydroprobetaenone I + 3 NADPH + 3 O2 + 3 H(+) = betaenone C + 3 NADP(+) + 3 H2O. The protein operates within mycotoxin biosynthesis. Its function is as follows. Cytochrome P450 monooxygenase; part of the gene cluster that mediates the biosynthesis of betaenones, phytotoxic polyketides involved in leaf spot disease in sugar beets. The first step of the pathway is the synthesis of dehydroprobetaenone I by the polyketide synthase bet1 and the enoyl reductase bet3 via condensation of one acetyl-CoA starter unit with 7 malonyl-CoA units and 5 methylations. The C-terminal reductase (R) domain of bet1 catalyzes the reductive release of the polyketide chain. Because bet1 lacks a designated enoylreductase (ER) domain, the required activity is provided the enoyl reductase bet3. The short-chain dehydrogenase/reductase bet4 then catalyzes reduction of dehydroprobetaenone I to probetaenone I. The cytochrome P450 monooxygenase bet2 catalyzes successive epoxidation, oxidation (resulting from epoxide opening) and hydroxylation to install a tertiary alcohol in the decaline ring to yield betaenone C from dehydroprobetaenone I and betaenone B from probetaenone I. The FAD-linked oxidoreductase (orf1) is probably responsible for the conversion of betaenone C to betaenone A via an intramolecular aldol reaction between C-1 and C-17 to form the bridged tricyclic system in betaenone A. This is Cytochrome P450 monooxygenase bet2 from Neocamarosporium betae (Beet black rot fungus).